Here is a 416-residue protein sequence, read N- to C-terminus: Serine hydroxymethyltransferase (416 aa).

Residues Leu-121 and 125 to 127 each bind (6S)-5,6,7,8-tetrahydrofolate; that span reads GHL. The residue at position 229 (Lys-229) is an N6-(pyridoxal phosphate)lysine. 354-356 contacts (6S)-5,6,7,8-tetrahydrofolate; that stretch reads SPF.

It belongs to the SHMT family. As to quaternary structure, homodimer. The cofactor is pyridoxal 5'-phosphate.

Its subcellular location is the cytoplasm. It carries out the reaction (6R)-5,10-methylene-5,6,7,8-tetrahydrofolate + glycine + H2O = (6S)-5,6,7,8-tetrahydrofolate + L-serine. Its pathway is one-carbon metabolism; tetrahydrofolate interconversion. The protein operates within amino-acid biosynthesis; glycine biosynthesis; glycine from L-serine: step 1/1. In terms of biological role, catalyzes the reversible interconversion of serine and glycine with tetrahydrofolate (THF) serving as the one-carbon carrier. This reaction serves as the major source of one-carbon groups required for the biosynthesis of purines, thymidylate, methionine, and other important biomolecules. Also exhibits THF-independent aldolase activity toward beta-hydroxyamino acids, producing glycine and aldehydes, via a retro-aldol mechanism. In Halorhodospira halophila (strain DSM 244 / SL1) (Ectothiorhodospira halophila (strain DSM 244 / SL1)), this protein is Serine hydroxymethyltransferase.